A 475-amino-acid chain; its full sequence is Cysteine--tRNA ligase (475 aa).

Cysteine 28 contacts Zn(2+). The 'HIGH' region signature appears at 30 to 40; that stretch reads PTVYDYAHIGN. Cysteine 213, histidine 238, and glutamate 242 together coordinate Zn(2+). A 'KMSKS' region motif is present at residues 270 to 274; that stretch reads KMSKS. Residue lysine 273 coordinates ATP.

The protein belongs to the class-I aminoacyl-tRNA synthetase family. As to quaternary structure, monomer. It depends on Zn(2+) as a cofactor.

It is found in the cytoplasm. The catalysed reaction is tRNA(Cys) + L-cysteine + ATP = L-cysteinyl-tRNA(Cys) + AMP + diphosphate. In Chlamydia muridarum (strain MoPn / Nigg), this protein is Cysteine--tRNA ligase (cysS).